A 267-amino-acid polypeptide reads, in one-letter code: Hydroxynaphthalene reductase-like protein Arp2 (267 aa).

NADP(+) contacts are provided by Ile-25, Asn-45, Asp-71, and Asn-98. Catalysis depends on proton donor residues Ser-147 and Ser-148. Residues Tyr-162, Lys-166, Val-195, and Thr-197 each coordinate NADP(+). Tyr-162 functions as the Proton acceptor in the catalytic mechanism. Catalysis depends on Lys-166, which acts as the Lowers pKa of active site Tyr.

Belongs to the short-chain dehydrogenases/reductases (SDR) family.

Hydroxynaphthalene reductase-like protein; part of the Pks2 gene cluster that mediates the formation of infectious structures (appressoria), enabling these fungi to kill insects faster. The product of the Pks2 gene cluster is different from the one of Pks1 and has still not been identified. In Metarhizium robertsii (strain ARSEF 23 / ATCC MYA-3075) (Metarhizium anisopliae (strain ARSEF 23)), this protein is Hydroxynaphthalene reductase-like protein Arp2.